We begin with the raw amino-acid sequence, 182 residues long: Dual-action ribosomal maturation protein DarP (182 aa).

A disordered region spans residues 1–20 (MNKQPEEWQDPQSLQQQDDE).

It belongs to the DarP family.

It is found in the cytoplasm. Functionally, member of a network of 50S ribosomal subunit biogenesis factors which assembles along the 30S-50S interface, preventing incorrect 23S rRNA structures from forming. Promotes peptidyl transferase center (PTC) maturation. The polypeptide is Dual-action ribosomal maturation protein DarP (Sodalis glossinidius (strain morsitans)).